The primary structure comprises 47 residues: Protein PsbN (47 aa).

The chain crosses the membrane as a helical span at residues 9-31 (YSLLIAMVTITFGLTGYGLYTAF).

The protein belongs to the PsbN family.

It is found in the cellular thylakoid membrane. In terms of biological role, may play a role in photosystem I and II biogenesis. The sequence is that of Protein PsbN from Prochlorococcus marinus (strain MIT 9303).